The primary structure comprises 214 residues: MIFHIFQIDFIYSFLISFIMLKNLDEITSSIIADPQNKDFTERGIFPLFSAPKTARINIVGQAPGLKAEQSRLYWNDKSGDRLREWLGVDYDYFYNSGIFAVLPMDFYYPGYGKSGDLPPRQGFAERWHPMILGNLPNIQLTILIGQYAQKYYLPENKDNVTNTVKNYRQFLPHFMPLVHPSPRNQLWVTKNPWFEEQVIPELQILVKQIINKD.

The protein belongs to the uracil-DNA glycosylase (UDG) superfamily.

This is an uncharacterized protein from Haemophilus influenzae (strain ATCC 51907 / DSM 11121 / KW20 / Rd).